The sequence spans 559 residues: Fanconi-associated nuclease 1 homolog (559 aa).

Positions 386, 507, 522, and 523 each coordinate Mn(2+). Residues 443–555 enclose the VRR-NUC domain; the sequence is DGSYRDAIRC…MPVAVCYVRW (113 aa).

Belongs to the FAN1 family. Mn(2+) serves as cofactor. The cofactor is Mg(2+).

It carries out the reaction Hydrolytically removes 5'-nucleotides successively from the 3'-hydroxy termini of 3'-hydroxy-terminated oligonucleotides.. Nuclease required for the repair of DNA interstrand cross-links (ICL). Acts as a 5'-3' exonuclease that anchors at a cut end of DNA and cleaves DNA successively at every third nucleotide, allowing to excise an ICL from one strand through flanking incisions. Also has endonuclease activity toward 5'-flaps. This is Fanconi-associated nuclease 1 homolog from Pseudomonas aeruginosa (strain ATCC 15692 / DSM 22644 / CIP 104116 / JCM 14847 / LMG 12228 / 1C / PRS 101 / PAO1).